Consider the following 966-residue polypeptide: Leucine--tRNA ligase (966 aa).

The 'HIGH' region signature appears at 71–82 (PYPSGAGLHVGH). The disordered stretch occupies residues 561-580 (YSPRTFDPDDADTKPETPLS). Basic and acidic residues predominate over residues 571-580 (ADTKPETPLS). The 'KMSKS' region signature appears at 734–738 (KMGKS). ATP is bound at residue K737.

The protein belongs to the class-I aminoacyl-tRNA synthetase family.

Its subcellular location is the cytoplasm. It carries out the reaction tRNA(Leu) + L-leucine + ATP = L-leucyl-tRNA(Leu) + AMP + diphosphate. The polypeptide is Leucine--tRNA ligase (Streptomyces coelicolor (strain ATCC BAA-471 / A3(2) / M145)).